The chain runs to 696 residues: Putative zinc metalloproteinase YIL108W (696 aa).

Residue K245 forms a Glycyl lysine isopeptide (Lys-Gly) (interchain with G-Cter in ubiquitin) linkage. H318 serves as a coordination point for Zn(2+). The active site involves E319. The Zn(2+) site is built by H322 and H328. Phosphoserine is present on S361. Glycyl lysine isopeptide (Lys-Gly) (interchain with G-Cter in ubiquitin) cross-links involve residues K478, K518, K579, K590, and K596. One can recognise a Jacalin-type lectin domain in the interval 522-695 (GIKSPLYGRS…VDAFGIIYGA (174 aa)).

It belongs to the peptidase M10B family. Zn(2+) is required as a cofactor.

It is found in the cytoplasm. The polypeptide is Putative zinc metalloproteinase YIL108W (Saccharomyces cerevisiae (strain ATCC 204508 / S288c) (Baker's yeast)).